The primary structure comprises 28 residues: Aspartate aminotransferase, mitochondrial (28 aa).

This sequence belongs to the class-I pyridoxal-phosphate-dependent aminotransferase family. As to quaternary structure, homodimer. Requires pyridoxal 5'-phosphate as cofactor.

The protein resides in the mitochondrion matrix. The catalysed reaction is L-aspartate + 2-oxoglutarate = oxaloacetate + L-glutamate. Functionally, plays a key role in amino acid metabolism. Important for metabolite exchange between mitochondria and cytosol. In Catharanthus roseus (Madagascar periwinkle), this protein is Aspartate aminotransferase, mitochondrial.